Reading from the N-terminus, the 147-residue chain is UPF0735 ACT domain-containing protein GTNG_2535 (147 aa).

The region spanning 69–144 (TLFFHLEDRS…FVEKVEIVGS (76 aa)) is the ACT domain.

The protein belongs to the UPF0735 family.

This Geobacillus thermodenitrificans (strain NG80-2) protein is UPF0735 ACT domain-containing protein GTNG_2535.